We begin with the raw amino-acid sequence, 114 residues long: Hydrogenase maturation factor HypA (114 aa).

Position 2 (His-2) interacts with Ni(2+). Residues Cys-73, Cys-76, Cys-89, and Cys-92 each coordinate Zn(2+).

It belongs to the HypA/HybF family.

In terms of biological role, involved in the maturation of [NiFe] hydrogenases. Required for nickel insertion into the metal center of the hydrogenase. This chain is Hydrogenase maturation factor HypA, found in Psychromonas ingrahamii (strain DSM 17664 / CCUG 51855 / 37).